Reading from the N-terminus, the 149-residue chain is Internal scaffolding protein ORF3 (149 aa).

Belongs to the microvidae B protein family.

The protein localises to the host cytoplasm. In terms of biological role, participates in the assembly of the viral procapsid in the cytoplasm. Released from the procapsid upon genome packaging, possibly through affinity displacement by the protein ORF8, or by proteolysis. This is Internal scaffolding protein ORF3 from Spiroplasma virus 4 (SpV4).